A 201-amino-acid polypeptide reads, in one-letter code: UPF0056 membrane protein PH0760 (201 aa).

6 helical membrane-spanning segments follow: residues 8–28 (FMILYTGMFAITNPIGAVPVF), 49–69 (ITVFITLTVFALVGQWIFKFF), 73–93 (IDAFAIAGGILLFRMGMEMLS), 111–131 (VAVIPLAIPLISGPGAITTVM), 140–160 (GIVILTIIAIGLTTYGILYSG), and 181–201 (LILTSMAMQMIINGIKGAFGI).

Belongs to the UPF0056 (MarC) family.

It is found in the cell membrane. This is UPF0056 membrane protein PH0760 from Pyrococcus horikoshii (strain ATCC 700860 / DSM 12428 / JCM 9974 / NBRC 100139 / OT-3).